The sequence spans 199 residues: Transgelin-3 (199 aa).

The region spanning 24 to 136 (ADLENKLVDW…RTLMALGSVA (113 aa)) is the Calponin-homology (CH) domain. Ser163 is subject to Phosphoserine. Residues 174 to 199 (IGLQMGSNKGASQAGMTGYGMPRQIM) form a Calponin-like repeat. Positions 176-188 (LQMGSNKGASQAG) are enriched in polar residues. The segment at 176 to 199 (LQMGSNKGASQAGMTGYGMPRQIM) is disordered.

It belongs to the calponin family.

In Pongo abelii (Sumatran orangutan), this protein is Transgelin-3 (TAGLN3).